Consider the following 366-residue polypeptide: Chorismate synthase (366 aa).

The NADP(+) site is built by arginine 48 and arginine 54. FMN-binding positions include 132–134 (RSS), 244–245 (NA), glycine 289, 304–308 (KPTSS), and arginine 330.

Belongs to the chorismate synthase family. As to quaternary structure, homotetramer. It depends on FMNH2 as a cofactor.

The enzyme catalyses 5-O-(1-carboxyvinyl)-3-phosphoshikimate = chorismate + phosphate. It participates in metabolic intermediate biosynthesis; chorismate biosynthesis; chorismate from D-erythrose 4-phosphate and phosphoenolpyruvate: step 7/7. Its function is as follows. Catalyzes the anti-1,4-elimination of the C-3 phosphate and the C-6 proR hydrogen from 5-enolpyruvylshikimate-3-phosphate (EPSP) to yield chorismate, which is the branch point compound that serves as the starting substrate for the three terminal pathways of aromatic amino acid biosynthesis. This reaction introduces a second double bond into the aromatic ring system. The sequence is that of Chorismate synthase from Methylorubrum populi (strain ATCC BAA-705 / NCIMB 13946 / BJ001) (Methylobacterium populi).